The primary structure comprises 108 residues: MGLSLAAYAGAALAEIAGCFAVWAWWRLGASALWLVPGALSLGAFAWLLALTPVEVAGRSYAVYGGIYVAASLLWLWAVEGVRPDRWDMGGAALVLAGAAVILWAPRG.

4 helical membrane-spanning segments follow: residues 5-25, 32-52, 62-82, and 86-106; these read LAAY…VWAW, ALWL…LALT, AVYG…VEGV, and RWDM…LWAP.

It belongs to the UPF0060 family.

The protein localises to the cell inner membrane. The sequence is that of UPF0060 membrane protein RSKD131_0092 from Cereibacter sphaeroides (strain KD131 / KCTC 12085) (Rhodobacter sphaeroides).